A 96-amino-acid polypeptide reads, in one-letter code: UPF0358 protein Aflv_1873 (96 aa).

It belongs to the UPF0358 family.

The polypeptide is UPF0358 protein Aflv_1873 (Anoxybacillus flavithermus (strain DSM 21510 / WK1)).